Consider the following 652-residue polypeptide: MPDRLVPATLARRDDGILVSPEYGELPRDASRARAHANRMLAGTGLLARWQGRRTFTIVETGFGTGGRFLATWAAWRDDPARCERLHFVAIEAHPFTREDLRRAVSHLVADTTISENADALIDAWPMHVPGLHRLEFDAGRVVLTLAFGDARDMLQRLVARADAFYLGNVASAAHGDVLSADVIRALARIAADGATYATHSHDDTVKHALEQTGFTSRDVEDCAGEPALRVGEYAPRWRMRRHEPPRALPVAAREAIVIGAGLAGCAVVERLAARGWNITLIERHERIASEASGNPAGVFHPLMTRDDNVASRLTRSGFLHALARWRALEDAGHAFARSTRGMIHLAESADDFARMRDAFDALGAPSDYVSLLDTDAARAHLNLPVAHGGLLFPHGGAVWPAGVCAAQIAAAGERVTLLAGTEVARLERDRDIWRAVDAAGATLAEAPVVVLANAGDAVRLAGLRHVALQPVRGQLTLLPPGSTAPLPCPTIGDGYAVPLDDGTLLIGATFEPDDVDRTMRTVGHIENLARVRHLLPGLIGELPDVDTLRGRVAFRWVVADRVPVIGPLADEAQAVANARALSGAKARDLPRTAGLYGAFGYGSRGLVWAALGAELIASQLEGEPLPLERELVDAVDPARFLIRALRGRQIG.

Positions 1-235 (MPDRLVPATL…EPALRVGEYA (235 aa)) are tRNA (mnm(5)s(2)U34)-methyltransferase. The segment at 259 to 652 (IGAGLAGCAV…IRALRGRQIG (394 aa)) is FAD-dependent cmnm(5)s(2)U34 oxidoreductase.

In the N-terminal section; belongs to the methyltransferase superfamily. tRNA (mnm(5)s(2)U34)-methyltransferase family. The protein in the C-terminal section; belongs to the DAO family. FAD is required as a cofactor.

The protein localises to the cytoplasm. The enzyme catalyses 5-aminomethyl-2-thiouridine(34) in tRNA + S-adenosyl-L-methionine = 5-methylaminomethyl-2-thiouridine(34) in tRNA + S-adenosyl-L-homocysteine + H(+). Catalyzes the last two steps in the biosynthesis of 5-methylaminomethyl-2-thiouridine (mnm(5)s(2)U) at the wobble position (U34) in tRNA. Catalyzes the FAD-dependent demodification of cmnm(5)s(2)U34 to nm(5)s(2)U34, followed by the transfer of a methyl group from S-adenosyl-L-methionine to nm(5)s(2)U34, to form mnm(5)s(2)U34. This is tRNA 5-methylaminomethyl-2-thiouridine biosynthesis bifunctional protein MnmC from Burkholderia ambifaria (strain ATCC BAA-244 / DSM 16087 / CCUG 44356 / LMG 19182 / AMMD) (Burkholderia cepacia (strain AMMD)).